Here is a 191-residue protein sequence, read N- to C-terminus: ATP-dependent Clp protease proteolytic subunit 1 (191 aa).

Serine 91 (nucleophile) is an active-site residue. Residue histidine 116 is part of the active site.

This sequence belongs to the peptidase S14 family. Fourteen ClpP subunits assemble into 2 heptameric rings which stack back to back to give a disk-like structure with a central cavity, resembling the structure of eukaryotic proteasomes.

It is found in the cytoplasm. It catalyses the reaction Hydrolysis of proteins to small peptides in the presence of ATP and magnesium. alpha-casein is the usual test substrate. In the absence of ATP, only oligopeptides shorter than five residues are hydrolyzed (such as succinyl-Leu-Tyr-|-NHMec, and Leu-Tyr-Leu-|-Tyr-Trp, in which cleavage of the -Tyr-|-Leu- and -Tyr-|-Trp bonds also occurs).. Cleaves peptides in various proteins in a process that requires ATP hydrolysis. Has a chymotrypsin-like activity. Plays a major role in the degradation of misfolded proteins. The protein is ATP-dependent Clp protease proteolytic subunit 1 of Chlamydia pneumoniae (Chlamydophila pneumoniae).